The chain runs to 375 residues: Aminomethyltransferase (375 aa).

This sequence belongs to the GcvT family. In terms of assembly, the glycine cleavage system is composed of four proteins: P, T, L and H.

It catalyses the reaction N(6)-[(R)-S(8)-aminomethyldihydrolipoyl]-L-lysyl-[protein] + (6S)-5,6,7,8-tetrahydrofolate = N(6)-[(R)-dihydrolipoyl]-L-lysyl-[protein] + (6R)-5,10-methylene-5,6,7,8-tetrahydrofolate + NH4(+). Its function is as follows. The glycine cleavage system catalyzes the degradation of glycine. In Cupriavidus metallidurans (strain ATCC 43123 / DSM 2839 / NBRC 102507 / CH34) (Ralstonia metallidurans), this protein is Aminomethyltransferase.